Consider the following 496-residue polypeptide: Fibronectin type III and SPRY domain-containing protein 1 (496 aa).

Residues 4 to 99 are a coiled coil; sequence QKEALRKIIT…ALESSEELLE (96 aa). Residues 105-162 enclose the COS domain; sequence LLATDSKDFPQAAKQIKDGVTMAPAFRLSLKAKVSDNMSHLMVDFAQERRMLQALTFL. Residues 164 to 268 form the Fibronectin type-III domain; that stretch reads VPSAPVIDLT…EPVTLETPAF (105 aa). Residues 268–477 enclose the B30.2/SPRY domain; sequence FMFRLDASTS…VTTGLQVPSS (210 aa). Residues 301–336 form a disordered region; the sequence is KAREKDGKGRTASPVNSPARGTPSPKRMPSGRGGRD. An omega-N-methylarginine mark is found at R310 and R320.

As to quaternary structure, oligomerization is required for binding to microtubules.

The protein resides in the cytoplasm. Its subcellular location is the cytoskeleton. It localises to the microtubule organizing center. The protein localises to the centrosome. It is found in the nucleus. The protein resides in the cleavage furrow. In terms of biological role, may be involved in microtubule organization and stabilization. This chain is Fibronectin type III and SPRY domain-containing protein 1 (FSD1), found in Bos taurus (Bovine).